Consider the following 579-residue polypeptide: 2-succinyl-5-enolpyruvyl-6-hydroxy-3-cyclohexene-1-carboxylate synthase (579 aa).

This sequence belongs to the TPP enzyme family. MenD subfamily. Homodimer. Mg(2+) is required as a cofactor. Requires Mn(2+) as cofactor. Thiamine diphosphate serves as cofactor.

The catalysed reaction is isochorismate + 2-oxoglutarate + H(+) = 5-enolpyruvoyl-6-hydroxy-2-succinyl-cyclohex-3-ene-1-carboxylate + CO2. It functions in the pathway quinol/quinone metabolism; 1,4-dihydroxy-2-naphthoate biosynthesis; 1,4-dihydroxy-2-naphthoate from chorismate: step 2/7. Its pathway is quinol/quinone metabolism; menaquinone biosynthesis. Catalyzes the thiamine diphosphate-dependent decarboxylation of 2-oxoglutarate and the subsequent addition of the resulting succinic semialdehyde-thiamine pyrophosphate anion to isochorismate to yield 2-succinyl-5-enolpyruvyl-6-hydroxy-3-cyclohexene-1-carboxylate (SEPHCHC). The protein is 2-succinyl-5-enolpyruvyl-6-hydroxy-3-cyclohexene-1-carboxylate synthase of Shewanella frigidimarina (strain NCIMB 400).